The following is a 130-amino-acid chain: Small ribosomal subunit protein uS11 (130 aa).

This sequence belongs to the universal ribosomal protein uS11 family. Part of the 30S ribosomal subunit. Interacts with proteins S7 and S18. Binds to IF-3.

In terms of biological role, located on the platform of the 30S subunit, it bridges several disparate RNA helices of the 16S rRNA. Forms part of the Shine-Dalgarno cleft in the 70S ribosome. The polypeptide is Small ribosomal subunit protein uS11 (Campylobacter lari (strain RM2100 / D67 / ATCC BAA-1060)).